A 289-amino-acid polypeptide reads, in one-letter code: N-methyltransferase FrzE (289 aa).

It belongs to the methyltransferase superfamily.

The catalysed reaction is (1S,4S)-4-[(4-hydroxyphenyl)methyl]-2,5-diazaspiro[bicyclo[3.2.1]octane-6,1'-cyclohexan]-4'-one + S-adenosyl-L-methionine = (1S,4S)-4-[(4-hydroxyphenyl)methyl]-2-methyl-2,5-diazaspiro[bicyclo[3.2.1]octane-6,1'-cyclohexan]-4'-one + S-adenosyl-L-homocysteine + H(+). The enzyme catalyses (1S,4S)-4-[(4-methoxyphenyl)methyl]-2,5-diazaspiro[bicyclo[3.2.1]octane-6,1'-cyclohexan]-4'-one + S-adenosyl-L-methionine = (1S,4S)-4-[(4-methoxyphenyl)methyl]-2-methyl-2,5-diazaspiro[bicyclo[3.2.1]octane-6,1'-cyclohexan]-4'-one + S-adenosyl-L-homocysteine + H(+). Its pathway is secondary metabolite biosynthesis. Its function is as follows. N-methyltransferase; part of the gene cluster that mediates the biosynthesis of the alkaloid (-)-FR901483, a potent immunosuppressant that shows efficacy in animal models and a probable inhibitor of purine nucleotide biosynthesis by targeting phosphoribosylpyrophosphate amidotransferase (PPAT). Within the pathway, FrzE methylates the amine at position C10'. The biosynthesis of (-)-FR901483 starts with the condensation of two L-tyrosines to yield (S,S)-dityrosyl-piperazine. This process occurs in 3 steps with the non-canonical nonribosomal peptide synthetase FrzA catalyzing the reduction of L-tyrosine into L-tyrosinal, the spontaneous condensation of 2 L-tyrosinal units, and the subsequent reduction by the NmrA-like family domain-containing oxidoreductase FrzB. The cytochrome P450 monooxygenase FrzC then performs coupling between N10 and C1' to morph the piperazine into a 1,4-diazabicyclo[3.2.1]octane spiro-fused to a 2,5-cyclohexadienone. The dienone portion is further reduced to cyclohexanone by the flavin-dependent reductase FrzD. The methyltranserases (MTs) FrzE and FrzF are then involved in the methylation at the C10' amine and the C4 phenolic oxygen, respectively. The order of the two MTs appear to be interchangeable. Cleavage of the C9-N10' bond by the dioxygenase FrzG then leads to formation of a conjugated iminium. In addition to the oxidation of C9, an additional dehydrogenation between C7 and C8 can occur to give a likely shunt product. The next biosynthetic step is the intramolecular aldol condensation catalyzed by the newly identified aldolase FrzH to yield an aza-tricyclic product with the formation of a C9-C3' bond. The short-chain dehydrogenase/reductase FrzI then produces dephospho-(-)-FR901483 that is phosphorylated at C4'-OH into (-)-FR901483 by the phosphotransferase FrzJ. The chain is N-methyltransferase FrzE from Cladobotryum sp.